Consider the following 812-residue polypeptide: Protein let-653 (812 aa).

A signal peptide spans 1 to 21; the sequence is MRHPLISLLLLIAFYSTSSEA. 2 Apple domains span residues 26-116 and 123-209; these read CNSF…WKYC and CSGE…ENNC. Cystine bridges form between cysteine 26–cysteine 116, cysteine 53–cysteine 88, cysteine 57–cysteine 72, cysteine 123–cysteine 209, cysteine 154–cysteine 178, and cysteine 158–cysteine 166. Residues asparagine 172, asparagine 211, and asparagine 272 are each glycosylated (N-linked (GlcNAc...) asparagine). Residues 221–725 enclose the ZP domain; it reads ECRDNGISVS…NTCDDVEGCD (505 aa). 2 stretches are compositionally biased toward low complexity: residues 375–449 and 496–584; these read QVTT…STTT and PTTT…PASS. Disordered stretches follow at residues 375–461 and 494–584; these read QVTT…STIM and DVPT…PASS. N-linked (GlcNAc...) asparagine glycosylation is present at asparagine 771.

In terms of processing, cleaved at the C-terminal domain. In terms of tissue distribution, expressed in external cuticle-producing epithelial cells including the epidermis, vulva, rectum, excretory duct and excretory pore.

The protein localises to the apical cell membrane. Its subcellular location is the secreted. It is found in the extracellular space. Required for epithelial tube development and shaping. Involved in the morphogenesis and function of the three unicellular tubes of the excretory system, the canal cell, the duct cell and the pore cell. Also plays a role in cuticle development, alae formation and shaping of the vulval lumen. Required for larval development. This Caenorhabditis elegans protein is Protein let-653.